A 140-amino-acid polypeptide reads, in one-letter code: MIDQLQGTWKSISCENSEDYMKELGIGRASRKLGRLAKPTVTISTDGDVITIKTKSIFKNNEISFKLGEEFEEITPGGHKTKSKVTLDKESLIQVQDWDGKETTITRKLVDGKMVVESTVNSVICTRTYEKVSSNSVSNS.

A fatty acid contacts are provided by residues arginine 107 and 127–129 (RTY).

It belongs to the calycin superfamily. Fatty-acid binding protein (FABP) family. In terms of tissue distribution, expressed in a number of retinoblastoma cell lines.

Its function is as follows. May play a role in lipid transport. This is Fatty acid-binding protein 12 (FABP12) from Homo sapiens (Human).